The chain runs to 1122 residues: Protein CAF130 (1122 aa).

Residues 1–24 form a disordered region; it reads MTKKKAATNYAERQNLASEDSSGD. The span at 11–24 shows a compositional bias: polar residues; that stretch reads AERQNLASEDSSGD. Ser-1042 carries the phosphoserine modification.

As to quaternary structure, subunit of the 1.0 MDa CCR4-NOT core complex that contains CCR4, CAF1, NOT1, NOT2, NOT3, NOT4, NOT5, CAF40 and CAF130. In the complex interacts with NOT1. The core complex probably is part of a less characterized 1.9 MDa CCR4-NOT complex.

The protein localises to the cytoplasm. It is found in the nucleus. Acts as a component of the CCR4-NOT core complex, which in the nucleus seems to be a general transcription factor, and in the cytoplasm the major mRNA deadenylase involved in mRNA turnover. This is Protein CAF130 (CAF130) from Saccharomyces cerevisiae (strain ATCC 204508 / S288c) (Baker's yeast).